A 570-amino-acid chain; its full sequence is Sulfite reductase [NADPH] hemoprotein beta-component (570 aa).

C434, C440, C479, and C483 together coordinate [4Fe-4S] cluster. Residue C483 participates in siroheme binding.

The protein belongs to the nitrite and sulfite reductase 4Fe-4S domain family. As to quaternary structure, alpha(8)-beta(8). The alpha component is a flavoprotein, the beta component is a hemoprotein. It depends on siroheme as a cofactor. The cofactor is [4Fe-4S] cluster.

It catalyses the reaction hydrogen sulfide + 3 NADP(+) + 3 H2O = sulfite + 3 NADPH + 4 H(+). It functions in the pathway sulfur metabolism; hydrogen sulfide biosynthesis; hydrogen sulfide from sulfite (NADPH route): step 1/1. In terms of biological role, component of the sulfite reductase complex that catalyzes the 6-electron reduction of sulfite to sulfide. This is one of several activities required for the biosynthesis of L-cysteine from sulfate. In Shigella sonnei (strain Ss046), this protein is Sulfite reductase [NADPH] hemoprotein beta-component.